A 183-amino-acid polypeptide reads, in one-letter code: MKQFIEFIPLIVFFAVYKFYDIYMATGALVVVTGLQLAYSWIRYRKVEKMQLFTFLLVGFFGGLTVFFHDDTFIKWKVTVINVLFALGLLISRYGFGKNLIKQMLGKELQAPDPVWDRVNLGWAGFFTVCGLLNLYVAFNLPQEMWVNFKVFGLLGMTLVFTLLSGVYLYRHLPAEQKNEMKK.

Transmembrane regions (helical) follow at residues 4-24 (FIEF…DIYM), 50-70 (MQLF…FFHD), 72-92 (TFIK…LLIS), 119-139 (VNLG…YVAF), and 149-169 (FKVF…GVYL).

This sequence belongs to the YciB family.

It localises to the cell inner membrane. Plays a role in cell envelope biogenesis, maintenance of cell envelope integrity and membrane homeostasis. The sequence is that of Inner membrane-spanning protein YciB from Aeromonas hydrophila subsp. hydrophila (strain ATCC 7966 / DSM 30187 / BCRC 13018 / CCUG 14551 / JCM 1027 / KCTC 2358 / NCIMB 9240 / NCTC 8049).